We begin with the raw amino-acid sequence, 525 residues long: GMP synthase [glutamine-hydrolyzing] (525 aa).

The region spanning R9–L207 is the Glutamine amidotransferase type-1 domain. The active-site Nucleophile is the C86. Active-site residues include H181 and E183. Positions W208–R400 constitute a GMPS ATP-PPase domain. Residue S235–S241 participates in ATP binding.

As to quaternary structure, homodimer.

The catalysed reaction is XMP + L-glutamine + ATP + H2O = GMP + L-glutamate + AMP + diphosphate + 2 H(+). Its pathway is purine metabolism; GMP biosynthesis; GMP from XMP (L-Gln route): step 1/1. Its function is as follows. Catalyzes the synthesis of GMP from XMP. This Salmonella newport (strain SL254) protein is GMP synthase [glutamine-hydrolyzing].